Consider the following 162-residue polypeptide: Large ribosomal subunit protein uL30 (162 aa).

The protein belongs to the universal ribosomal protein uL30 family. Part of the 50S ribosomal subunit.

This is Large ribosomal subunit protein uL30 from Korarchaeum cryptofilum (strain OPF8).